The primary structure comprises 156 residues: Aspartate carbamoyltransferase regulatory chain (156 aa).

Zn(2+)-binding residues include Cys-109, Cys-114, Cys-140, and Cys-143.

The protein belongs to the PyrI family. In terms of assembly, contains catalytic and regulatory chains. Zn(2+) is required as a cofactor.

Its function is as follows. Involved in allosteric regulation of aspartate carbamoyltransferase. This Methanosarcina acetivorans (strain ATCC 35395 / DSM 2834 / JCM 12185 / C2A) protein is Aspartate carbamoyltransferase regulatory chain.